The chain runs to 369 residues: uncharacterized protein (369 aa).

Belongs to the Gfo/Idh/MocA family.

This is an uncharacterized protein from Schizosaccharomyces pombe (strain 972 / ATCC 24843) (Fission yeast).